A 72-amino-acid polypeptide reads, in one-letter code: Translation initiation factor IF-1 (72 aa).

The region spanning 1 to 72 is the S1-like domain; sequence MSKEEAIEVE…TRGRITYRAK (72 aa).

This sequence belongs to the IF-1 family. As to quaternary structure, component of the 30S ribosomal translation pre-initiation complex which assembles on the 30S ribosome in the order IF-2 and IF-3, IF-1 and N-formylmethionyl-tRNA(fMet); mRNA recruitment can occur at any time during PIC assembly.

Its subcellular location is the cytoplasm. One of the essential components for the initiation of protein synthesis. Stabilizes the binding of IF-2 and IF-3 on the 30S subunit to which N-formylmethionyl-tRNA(fMet) subsequently binds. Helps modulate mRNA selection, yielding the 30S pre-initiation complex (PIC). Upon addition of the 50S ribosomal subunit IF-1, IF-2 and IF-3 are released leaving the mature 70S translation initiation complex. This chain is Translation initiation factor IF-1, found in Geobacter sulfurreducens (strain ATCC 51573 / DSM 12127 / PCA).